The sequence spans 427 residues: Peptidase B (427 aa).

2 residues coordinate Mn(2+): Lys195 and Asp200. The active site involves Lys207. Mn(2+) contacts are provided by Asp218, Asp277, and Glu279. Arg281 is an active-site residue.

It belongs to the peptidase M17 family. Homohexamer. Mn(2+) is required as a cofactor.

It is found in the cytoplasm. It catalyses the reaction Release of an N-terminal amino acid, Xaa, from a peptide or arylamide. Xaa is preferably Glu or Asp but may be other amino acids, including Leu, Met, His, Cys and Gln.. Functionally, probably plays an important role in intracellular peptide degradation. The chain is Peptidase B from Salmonella typhi.